The following is a 96-amino-acid chain: UPF0213 protein BCE33L0031 (96 aa).

Positions 4–79 (NKHCFYVVEC…KQLNRKQKEE (76 aa)) constitute a GIY-YIG domain.

It belongs to the UPF0213 family.

The sequence is that of UPF0213 protein BCE33L0031 from Bacillus cereus (strain ZK / E33L).